A 102-amino-acid polypeptide reads, in one-letter code: Ferredoxin, 2Fe-2S (102 aa).

The [2Fe-2S] cluster site is built by Cys-11, Cys-24, Cys-56, and Cys-60.

It belongs to the 2Fe2S Shethna-type ferredoxin family. [2Fe-2S] cluster is required as a cofactor.

Its function is as follows. Ferredoxins are iron-sulfur proteins that transfer electrons in a wide variety of metabolic reactions. This Clostridium pasteurianum protein is Ferredoxin, 2Fe-2S.